We begin with the raw amino-acid sequence, 382 residues long: MVNFVSLCDIKYGFVPKNSTDLFVKRKIHKLPSRGDVITRLPVFGSNARENLNAKPRRNLRVRPIFCKSYGDAAKVYQEEEIPRAKLIWRAIKLPMYSVALVPLTVGASAAYLETGLFLARRYVTLLLSSILIITWLNLSNDVYDFDTGADKNKMESVVNLVGSRTGTLAAAITSLALGVSGLVWTSLNASNIRAILLLASAILCGYVYQCPPFRLSYQGLGEPLCFAAFGPFATTAFYLLLGSSSEMRHLPLSGRVLSSSVLVGFTTSLILFCSHFHQVDGDLAVGKYSPLVRLGTEKGAFVVRWTIRLLYSMLLVLGLTRILPLPCTLMCFLTLPVGNLVSSYVEKHHKDNGKIFMAKYYCVRLHALLGAALSLGLVIAR.

The transit peptide at 1 to 66 directs the protein to the chloroplast; it reads MVNFVSLCDI…RRNLRVRPIF (66 aa). The next 8 membrane-spanning stretches (helical) occupy residues 99–119, 123–143, 168–188, 196–216, 224–244, 257–277, 323–343, and 361–381; these read VALVPLTVGASAAYLETGLFL, YVTLLLSSILIITWLNLSNDV, TLAAAITSLALGVSGLVWTSL, ILLLASAILCGYVYQCPPFRL, PLCFAAFGPFATTAFYLLLGS, VLSSSVLVGFTTSLILFCSHF, ILPLPCTLMCFLTLPVGNLVS, and YYCVRLHALLGAALSLGLVIA.

It belongs to the MenA family. Type 2 subfamily.

Its subcellular location is the plastid. The protein resides in the chloroplast membrane. It catalyses the reaction 2-carboxy-1,4-naphthoquinone + phytyl diphosphate + H(+) = demethylphylloquinone + CO2 + diphosphate. In terms of biological role, involved in the synthesis of phylloquinone (vitamin K1). Catalyzes the transfer of a prenyl chain to 2-carboxy-1,4-naphthoquinone. The sequence is that of 2-carboxy-1,4-naphthoquinone phytyltransferase, chloroplastic (ABC4) from Arabidopsis thaliana (Mouse-ear cress).